Consider the following 865-residue polypeptide: 3-O-alpha-D-mannopyranosyl-alpha-D-mannopyranose xylosylphosphotransferase (865 aa).

A compositionally biased stretch (polar residues) spans 1–10 (MLSTALSPSS). The tract at residues 1 to 66 (MLSTALSPSS…CRPSRSPRSR (66 aa)) is disordered. Topologically, residues 1 to 84 (MLSTALSPSS…HIRPHLTPRT (84 aa)) are cytoplasmic. Low complexity-rich tracts occupy residues 17–26 (SYSSSLSPTS) and 40–60 (SPSP…CRPS). The helical transmembrane segment at 85-105 (LTMLFLWMLSVWSIHHFFLPI) threads the bilayer. At 106–865 (SSLSRLSNPR…WDPVKDRYID (760 aa)) the chain is on the lumenal side. N-linked (GlcNAc...) asparagine glycosylation is found at asparagine 201 and asparagine 302. Positions 283 to 304 (KSKGRRHPRDLPGTPPSFSNLT) are disordered.

The protein belongs to the XPT1 family. The cofactor is Mn(2+).

Its subcellular location is the golgi apparatus membrane. It carries out the reaction 3-alpha-D-mannopyranosyl-alpha-D-mannopyranose + UDP-alpha-D-xylose = 3-O-(6-O-alpha-D-xylosylphospho-alpha-D-mannopyranosyl)-alpha-D-mannopyranose + UMP + H(+). In terms of biological role, xylosylphosphotransferase that is specific for UDP-xylose as a donor and mannose as an acceptor to form a xylose-alpha-1-phosphate-6-mannose linkage. Functions in the O-glycosylation of proteins en route through the secretory pathway. This chain is 3-O-alpha-D-mannopyranosyl-alpha-D-mannopyranose xylosylphosphotransferase (XPT1), found in Cryptococcus gattii serotype B (strain WM276 / ATCC MYA-4071) (Filobasidiella gattii).